We begin with the raw amino-acid sequence, 182 residues long: uncharacterized protein (182 aa).

A Nudix hydrolase domain is found at 36-164 (LRHRATYIVV…TPDSLKALSL (129 aa)). Residues 73-95 (GGVVQSGENYLESARREAEEELG) carry the Nudix box motif. Mg(2+)-binding residues include Glu89 and Glu93.

It belongs to the Nudix hydrolase family. The cofactor is Mg(2+).

This is an uncharacterized protein from Yersinia pestis.